A 323-amino-acid chain; its full sequence is MKRLDQVLAADGVNAELELVIKDVMVACKDIAYKLGQGELAGILGATEDENVQGETQKMLDVISNDLLKDILVANPYVRGVGSEEEDYTIAGNADGKYLVTFDPLDGSSNIDVNLSVGTIFSVLEAQDDQSGDNQEVFLQNGRKQVAAGYVLYGPSSLLVMTTGNGVNLFTLDTNIGEFVLTKEALQIPEDTAEFAINMSNQRFWEPEMKQYIDDCLLGEEGPLAKRYNMRWVASMVAEVHRILIRGGIFMYPYDNRDPSKAGKLRLMYEGNPMSMIVEQAGGASSTGRMDIMDVAPQGIHDRVPVVLGSKNEVAKVVAYHTK.

Mg(2+) contacts are provided by E84, D103, L105, and D106. Residues 106–109, N198, and K264 each bind substrate; that span reads DGSS. Position 270 (E270) interacts with Mg(2+).

Belongs to the FBPase class 1 family. Homotetramer. Mg(2+) is required as a cofactor.

The protein localises to the cytoplasm. It carries out the reaction beta-D-fructose 1,6-bisphosphate + H2O = beta-D-fructose 6-phosphate + phosphate. The protein operates within carbohydrate biosynthesis; gluconeogenesis. The polypeptide is Fructose-1,6-bisphosphatase class 1 (Hydrogenovibrio crunogenus (strain DSM 25203 / XCL-2) (Thiomicrospira crunogena)).